The chain runs to 970 residues: Longitudinals lacking protein, isoforms F/I/K/T (970 aa).

The BTB domain occupies 32–97 (VDCTLAAEGK…MYRGEVNISQ (66 aa)). Disordered regions lie at residues 115 to 200 (LSDN…SSVL), 228 to 340 (SSGP…ASAS), 447 to 468 (DAQQ…EGAQ), and 790 to 843 (QTVH…LQDD). Low complexity-rich tracts occupy residues 162–175 (SGDV…SSSP), 228–251 (SSGP…LTST), 263–293 (TSST…QTTS), and 329–340 (NSATGPNPASAS). 2 stretches are compositionally biased toward polar residues: residues 447-456 (DAQQRDPQAS) and 808-818 (QLQTHHIQTVV). Residues 819–828 (QSSSGQQQHD) show a composition bias toward low complexity. The C2H2-type 1; degenerate zinc finger occupies 903 to 925 (YVCRHCGKKYRWKSTLRRHENVE). The C2H2-type 2 zinc finger occupies 933 to 955 (HPCPYCSYKAKQRGNLGVHVRKH).

In terms of tissue distribution, by stage 11, isoform F is expressed throughout the mesoderm whereas isoform T, and at low levels isoform I, is expressed throughout the ectoderm. Isoform K is expressed in both mesoderm and ectoderm. Expression becomes restricted during later stages; starting from stage 14 to 15, isoform F is expressed in the gut. Isoform I is expressed in the CNS. Isoform I and isoform F show expression in the epithelium starting at stage 14, though for isoform I the CNS expression remains predominant. Expression is also seen in specific types of cells in the embryo; isoform K is expressed in the ventral furrow at stage 5 and in a dynamic pattern in the ventral neurogenic region starting at stage 7. Isoform T is expressed around the tracheal pits at stage 11. Isoform F shows transient enrichment in a dorsal cell layer in the CNS at stages 13 and 14.

It localises to the nucleus. Functionally, putative transcription factor required for axon growth and guidance in the central and peripheral nervous systems. Repels CNS axons away from the midline by promoting the expression of the midline repellent sli and its receptor robo. The polypeptide is Longitudinals lacking protein, isoforms F/I/K/T (Drosophila melanogaster (Fruit fly)).